The primary structure comprises 160 residues: Small ribosomal subunit protein bS6 (160 aa).

The disordered stretch occupies residues 96-160 (RKVKRFIPRA…PRTRKVSKEQ (65 aa)). Positions 126–145 (TTDASKTEASTEATASKQSE) are enriched in low complexity. Over residues 151-160 (PRTRKVSKEQ) the composition is skewed to basic residues.

Belongs to the bacterial ribosomal protein bS6 family.

Binds together with bS18 to 16S ribosomal RNA. The sequence is that of Small ribosomal subunit protein bS6 from Metamycoplasma arthritidis (strain 158L3-1) (Mycoplasma arthritidis).